The chain runs to 1848 residues: Cellulose-binding protein A (1848 aa).

Residues 1 to 28 form the signal peptide; it reads MQKKKSLNLLLALMMVFALVLPSIPALA. The CBM3 domain occupies 29 to 190; sequence ATSSMSVEFY…GAKVLGTAPG (162 aa). Cohesin domains follow at residues 291–428, 435–570, 668–801, 810–943, 952–1085, 1094–1227, 1236–1369, 1377–1511, and 1709–1847; these read VTAT…TVTI, MQIS…SVTI, VTAT…SVTI, VKAT…RLTI, and FAVK…SVKV.

Post-translationally, the N-terminus is blocked. In terms of processing, glycosylated.

The protein resides in the secreted. Functionally, binds to cellulose fibers and coordinates cellulase enzymes. The polypeptide is Cellulose-binding protein A (cbpA) (Clostridium cellulovorans).